We begin with the raw amino-acid sequence, 842 residues long: MSRPLSDQEKRKQISVRGLAGVENVTELKKNFNRHLHFTLVKDRNVATPRDYYFALAHTVRDHLVGRWIRTQQHYYEKDPKRIYYLSLEFYMGRTLQNTMVNLALENACDEATYQLGLDMEELEEIEEDAGLGNGGLGRLAACFLDSMATLGLAAYGYGIRYEFGIFNQKISGGWQMEEADDWLRYGNPWEKARPEFTLPVHFYGHVEHTSQGAKWVDTQVVLAMPYDTPVPGYRNNVVNTMRLWSAKAPNDFNLKDFNVGGYIQAVLDRNLAENISRVLYPNDNFFEGKELRLKQEYFVVAATLQDIIRRFKSSKFGCRDPVRTNFDAFPDKVAIQLNDTHPSLAIPELMRILVDLERMDWDKAWDVTVRTCAYTNHTVLPEALERWPVHLLETLLPRHLQIIYEINQRFLNRVAAAFPGDVDRLRRMSLVEEGAVKRINMAHLCIAGSHAVNGVARIHSEILKKTIFKDFYELEPHKFQNKTNGITPRRWLVLCNPGLAEVIAERIGEDFISDLDQLRKLLSFVDDEAFIRDVAKVKQENKLKFAAYLEREYKVHINPNSLFDIQVKRIHEYKRQLLNCLHVITLYNRIKREPNKFFVPRTVMIGGKAAPGYHMAKMIIRLVTAIGDVVNHDPAVGDRLRVIFLENYRVSLAEKVIPAADLSEQISTAGTEASGTGNMKFMLNGALTIGTMDGANVEMAEEAGEENFFIFGMRVEDVDKLDQRGYNAQEYYDRIPELRQVIEQLSSGFFSPKQPDLFKDIVNMLMHHDRFKVFADYEDYIKCQEKVSALYKNPREWTRMVIRNIATSGKFSSDRTIAQYAREIWGVEPSRQRLPAPDEAI.

An N-acetylserine modification is found at Ser2. Ser15 carries the post-translational modification Phosphoserine; by PHK; in form phosphorylase A. AMP is bound by residues Asp43 and Tyr76. A phosphotyrosine mark is found at Tyr204 and Tyr227. 310-319 is a binding site for AMP; the sequence is RRFKSSKFGC. The residue at position 430 (Ser430) is a Phosphoserine. At Tyr473 the chain carries Phosphotyrosine. At Ser514 the chain carries Phosphoserine. N6-(pyridoxal phosphate)lysine is present on Lys681. Phosphoserine occurs at positions 747 and 748.

Belongs to the glycogen phosphorylase family. As to quaternary structure, homodimer. Homotetramer; to form the enzymatically active phosphorylase A. Pyridoxal 5'-phosphate is required as a cofactor. In terms of processing, phosphorylation of Ser-15 converts phosphorylase B (unphosphorylated) to phosphorylase A.

It catalyses the reaction [(1-&gt;4)-alpha-D-glucosyl](n) + phosphate = [(1-&gt;4)-alpha-D-glucosyl](n-1) + alpha-D-glucose 1-phosphate. Its activity is regulated as follows. Allosterically regulated through the non-covalent binding of metabolites, being activated by AMP and inhibited by ATP, ADP, and glucose-6-phosphate. The activity is also controlled by post-translational modifications including phosphorylation. Its function is as follows. Allosteric enzyme that catalyzes the rate-limiting step in glycogen catabolism, the phosphorolytic cleavage of glycogen to produce glucose-1-phosphate, and plays a central role in maintaining cellular and organismal glucose homeostasis. This is Glycogen phosphorylase, muscle form from Homo sapiens (Human).